The following is a 171-amino-acid chain: ATP synthase subunit b (171 aa).

A helical transmembrane segment spans residues 2–22; sequence FVVKMVLGFLILLSPLCATGL.

The protein belongs to the ATPase B chain family. F-type ATPases have 2 components, F(1) - the catalytic core - and F(0) - the membrane proton channel. F(1) has five subunits: alpha(3), beta(3), gamma(1), delta(1), epsilon(1). F(0) has three main subunits: a(1), b(2) and c(10-14). The alpha and beta chains form an alternating ring which encloses part of the gamma chain. F(1) is attached to F(0) by a central stalk formed by the gamma and epsilon chains, while a peripheral stalk is formed by the delta and b chains.

It localises to the cell inner membrane. F(1)F(0) ATP synthase produces ATP from ADP in the presence of a proton or sodium gradient. F-type ATPases consist of two structural domains, F(1) containing the extramembraneous catalytic core and F(0) containing the membrane proton channel, linked together by a central stalk and a peripheral stalk. During catalysis, ATP synthesis in the catalytic domain of F(1) is coupled via a rotary mechanism of the central stalk subunits to proton translocation. Its function is as follows. Component of the F(0) channel, it forms part of the peripheral stalk, linking F(1) to F(0). This chain is ATP synthase subunit b, found in Helicobacter pylori (strain ATCC 700392 / 26695) (Campylobacter pylori).